Here is an 820-residue protein sequence, read N- to C-terminus: Phosphoenolpyruvate synthase (820 aa).

Residue histidine 438 is the Tele-phosphohistidine intermediate of the active site. Residues arginine 539, arginine 587, glutamate 689, glycine 710, serine 711, asparagine 712, and aspartate 713 each coordinate substrate. Glutamate 689 is a binding site for Mg(2+). Aspartate 713 lines the Mg(2+) pocket. Cysteine 762 functions as the Proton donor in the catalytic mechanism.

This sequence belongs to the PEP-utilizing enzyme family. It depends on Mg(2+) as a cofactor.

The enzyme catalyses pyruvate + ATP + H2O = phosphoenolpyruvate + AMP + phosphate + 2 H(+). Its pathway is carbohydrate biosynthesis; gluconeogenesis. Catalyzes the phosphorylation of pyruvate to phosphoenolpyruvate. This Aeropyrum pernix (strain ATCC 700893 / DSM 11879 / JCM 9820 / NBRC 100138 / K1) protein is Phosphoenolpyruvate synthase (ppsA).